The following is a 506-amino-acid chain: Maturase K (506 aa).

The protein belongs to the intron maturase 2 family. MatK subfamily.

The protein resides in the plastid. It is found in the chloroplast. Its function is as follows. Usually encoded in the trnK tRNA gene intron. Probably assists in splicing its own and other chloroplast group II introns. The sequence is that of Maturase K from Mentzelia lindleyi (Blazing star).